The sequence spans 188 residues: MATVERRVQVDPTDKRIHLQPQYEGDVGYGYGYGGRADYKSSGPSSNQIVALIVGVPVGGSLLALAGLTLAGSVIGLMLSVPLFLLFSPVIVPAAITIGLAVTAILASGLFGLTGLSSVSWVLNYLRGTSDTVPEQLDYAKRRMADAVGYAGQKGKEMGQYVQDKAHEAHDTSLTTETTEPGKTRRHT.

Alanine 2 bears the N-acetylalanine mark. The interval 2-51 (ATVERRVQVDPTDKRIHLQPQYEGDVGYGYGYGGRADYKSSGPSSNQIVA) is polar. A run of 3 helical transmembrane segments spans residues 49 to 69 (IVAL…AGLT), 74 to 94 (VIGL…IVPA), and 96 to 116 (ITIG…LTGL). A hydrophobic region spans residues 52-125 (LIVGVPVGGS…LSSVSWVLNY (74 aa)). A disordered region spans residues 164–188 (DKAHEAHDTSLTTETTEPGKTRRHT). Positions 172–181 (TSLTTETTEP) are enriched in polar residues.

The protein belongs to the oleosin family.

The protein resides in the lipid droplet. It localises to the membrane. May have a structural role to stabilize the lipid body during desiccation of the seed by preventing coalescence of the oil. Probably interacts with both lipid and phospholipid moieties of lipid bodies. May also provide recognition signals for specific lipase anchorage in lipolysis during seedling growth. This chain is Oleosin S2-2 (S2), found in Brassica napus (Rape).